The following is a 199-amino-acid chain: Peroxiredoxin-2 (199 aa).

Residues 7 to 165 (AHVGKPAPEF…ALRLVQAFQY (159 aa)) enclose the Thioredoxin domain. Cysteine 52 functions as the Cysteine sulfenic acid (-SOH) intermediate in the catalytic mechanism. Serine 113 bears the Phosphoserine mark. Threonine 183 bears the Phosphothreonine mark. At lysine 197 the chain carries N6-acetyllysine.

Belongs to the peroxiredoxin family. AhpC/Prx1 subfamily. In terms of assembly, homodimer; disulfide-linked, upon oxidation. 5 homodimers assemble to form a ring-like decamer. Interacts with TIPIN. Post-translationally, the enzyme can be inactivated by further oxidation of the cysteine sulfenic acid (C(P)-SOH) to sulphinic acid (C(P)-SO2H) instead of its condensation to a disulfide bond. It can be reactivated by forming a transient disulfide bond with sulfiredoxin SRXN1, which reduces the cysteine sulfinic acid in an ATP- and Mg-dependent manner. Acetylation increases resistance to transition to high molecular-mass complexes. Deacetylated by HDAC6 which decreases reducing activity.

The protein localises to the cytoplasm. The enzyme catalyses a hydroperoxide + [thioredoxin]-dithiol = an alcohol + [thioredoxin]-disulfide + H2O. Its function is as follows. Thiol-specific peroxidase that catalyzes the reduction of hydrogen peroxide and organic hydroperoxides to water and alcohols, respectively. Plays a role in cell protection against oxidative stress by detoxifying peroxides and as sensor of hydrogen peroxide-mediated signaling events. Might participate in the signaling cascades of growth factors and tumor necrosis factor-alpha by regulating the intracellular concentrations of H(2)O(2). The polypeptide is Peroxiredoxin-2 (PRDX2) (Bos taurus (Bovine)).